A 166-amino-acid chain; its full sequence is Interferon gamma (166 aa).

The signal sequence occupies residues 1–23 (MNYTSYILAFQLCVILCSSGCNC). Gln24 is subject to Pyrrolidone carboxylic acid. N-linked (GlcNAc...) asparagine glycans are attached at residues Asn39 and Asn106.

It belongs to the type II (or gamma) interferon family. In terms of assembly, homodimer. Interacts with IFNGR1 (via extracellular domain); this interaction promotes IFNGR1 dimerization. In terms of tissue distribution, released primarily from activated T lymphocytes.

It is found in the secreted. Functionally, type II interferon produced by immune cells such as T-cells and NK cells that plays crucial roles in antimicrobial, antiviral, and antitumor responses by activating effector immune cells and enhancing antigen presentation. Primarily signals through the JAK-STAT pathway after interaction with its receptor IFNGR1 to affect gene regulation. Upon IFNG binding, IFNGR1 intracellular domain opens out to allow association of downstream signaling components JAK2, JAK1 and STAT1, leading to STAT1 activation, nuclear translocation and transcription of IFNG-regulated genes. Many of the induced genes are transcription factors such as IRF1 that are able to further drive regulation of a next wave of transcription. Plays a role in class I antigen presentation pathway by inducing a replacement of catalytic proteasome subunits with immunoproteasome subunits. In turn, increases the quantity, quality, and repertoire of peptides for class I MHC loading. Increases the efficiency of peptide generation also by inducing the expression of activator PA28 that associates with the proteasome and alters its proteolytic cleavage preference. Up-regulates as well MHC II complexes on the cell surface by promoting expression of several key molecules such as cathepsins B/CTSB, H/CTSH, and L/CTSL. Participates in the regulation of hematopoietic stem cells during development and under homeostatic conditions by affecting their development, quiescence, and differentiation. This is Interferon gamma (IFNG) from Canis lupus familiaris (Dog).